A 198-amino-acid polypeptide reads, in one-letter code: Protein hunchback (198 aa).

Disordered regions lie at residues 16 to 117 and 152 to 198; these read SHHH…PMQS and NDKL…KYMA. The segment covering 17–31 has biased composition (basic residues); it reads HHHHHHHAHHSHHQH. 2 stretches are compositionally biased toward low complexity: residues 35–46 and 68–83; these read SNSNSNASSPHQ and QQQQ…QQQQ. A compositionally biased stretch (polar residues) spans 95 to 105; it reads PSPSNNDQNSP. Positions 179–198 are enriched in basic and acidic residues; the sequence is EPEKEHDLMSNSSEDMKYMA.

Belongs to the hunchback C2H2-type zinc-finger protein family.

The protein localises to the nucleus. In terms of biological role, gap class segmentation protein that controls development of head structures. The sequence is that of Protein hunchback (hb) from Drosophila disjuncta (Fruit fly).